The following is a 101-amino-acid chain: Small ribosomal subunit protein uS14 (101 aa).

This sequence belongs to the universal ribosomal protein uS14 family. In terms of assembly, part of the 30S ribosomal subunit. Contacts proteins S3 and S10.

Its function is as follows. Binds 16S rRNA, required for the assembly of 30S particles and may also be responsible for determining the conformation of the 16S rRNA at the A site. The sequence is that of Small ribosomal subunit protein uS14 from Shewanella denitrificans (strain OS217 / ATCC BAA-1090 / DSM 15013).